The following is a 570-amino-acid chain: Acetolactate synthase (570 aa).

Position 60 (E60) interacts with thiamine diphosphate. Residues Q162, 266-287, and 308-327 contribute to the FAD site; these read FRNQ…IGYD and DEII…LIGD. Residues 399 to 479 form a thiamine pyrophosphate binding region; the sequence is SHAIWMSRYF…IVHIVWNDST (81 aa). Position 450 (D450) interacts with Mg(2+).

This sequence belongs to the TPP enzyme family. Mg(2+) is required as a cofactor. The cofactor is thiamine diphosphate.

The catalysed reaction is 2 pyruvate + H(+) = (2S)-2-acetolactate + CO2. Its pathway is polyol metabolism; (R,R)-butane-2,3-diol biosynthesis; (R,R)-butane-2,3-diol from pyruvate: step 1/3. In Bacillus subtilis (strain 168), this protein is Acetolactate synthase (alsS).